Consider the following 303-residue polypeptide: Nitrogenase iron protein (303 aa).

An ATP-binding site is contributed by glycine 11 to serine 18. A [4Fe-4S] cluster-binding site is contributed by cysteine 112. An ADP-ribosylarginine; by dinitrogenase reductase ADP-ribosyltransferase modification is found at arginine 115. Cysteine 147 contributes to the [4Fe-4S] cluster binding site.

This sequence belongs to the NifH/BchL/ChlL family. As to quaternary structure, homodimer. It depends on [4Fe-4S] cluster as a cofactor. In terms of processing, the reversible ADP-ribosylation of Arg-115 inactivates the nitrogenase reductase and regulates nitrogenase activity.

The catalysed reaction is N2 + 8 reduced [2Fe-2S]-[ferredoxin] + 16 ATP + 16 H2O = H2 + 8 oxidized [2Fe-2S]-[ferredoxin] + 2 NH4(+) + 16 ADP + 16 phosphate + 6 H(+). Its function is as follows. The key enzymatic reactions in nitrogen fixation are catalyzed by the nitrogenase complex, which has 2 components: the iron protein and the molybdenum-iron protein. In Wolinella succinogenes (strain ATCC 29543 / DSM 1740 / CCUG 13145 / JCM 31913 / LMG 7466 / NCTC 11488 / FDC 602W) (Vibrio succinogenes), this protein is Nitrogenase iron protein.